The sequence spans 659 residues: Forkhead box protein P1-B (659 aa).

Composition is skewed to polar residues over residues 1-16 (MMQE…TAHQ) and 32-41 (KSTTPSSDIT). Disordered stretches follow at residues 1 to 41 (MMQE…SDIT) and 229 to 263 (ENSV…NGQY). A C2H2-type zinc finger spans residues 289-314 (GVCKWPGCEAVFEDFQSFLKHLNNEH). The leucine-zipper stretch occupies residues 331 to 352 (VQQLELQLAKDKERLQAMMTHL). Residues 365–369 (PLNLV) form a CTBP1-binding region. A disordered region spans residues 379 to 413 (PAASPPLSLPQTPTTPTAPLTPLSQTHSVITPTSL). Low complexity predominate over residues 387-404 (LPQTPTTPTAPLTPLSQT). A DNA-binding region (fork-head) is located at residues 448-538 (RPPFTYASLI…PQKISGSPAL (91 aa)). The interval 590–659 (GAMDHGNSNG…EDDHGTEDML (70 aa)) is disordered. The segment covering 595–605 (GNSNGSDSSPG) has biased composition (polar residues). The span at 641-659 (PDFDHHRDYEDDHGTEDML) shows a compositional bias: basic and acidic residues.

Shows complex and dynamic expression during early embryonic development. Prominent in many regions of the developing central nervous system, particularly in midbrain-hindbrain boundary, hindbrain and spinal cord. Strongly expressed in the retina, ear, branchial arches, hatching gland, heart, pronephric duct, gut, proctodeum, pectoral fin and swim bladder.

It is found in the nucleus. Transcriptional repressor. In Danio rerio (Zebrafish), this protein is Forkhead box protein P1-B (foxp1b).